The sequence spans 346 residues: Serpentine receptor class beta-11 (346 aa).

The next 7 helical transmembrane spans lie at 26–46 (YQMIISFCSVFPLIYFLLFKL), 57–77 (TIFISYFVSLVAFSMTHLTTS), 102–122 (IWNFFILFFLTLSTFFPCSVT), 139–159 (SVVMGPILVGFNVLLNFCIIF), 186–206 (FTFFIIIFFVNLVDVIFDLIL), 239–259 (VFLILIHIISFGIYVSAVVFF), and 278–298 (TFSTTIVPTYNFVIGSFSSFF).

The protein belongs to the nematode receptor-like protein srb family.

It is found in the membrane. The sequence is that of Serpentine receptor class beta-11 (srb-11) from Caenorhabditis elegans.